A 730-amino-acid polypeptide reads, in one-letter code: Hepatocyte growth factor (730 aa).

The N-terminal stretch at 1–31 is a signal peptide; the sequence is MWVTRLLPVLLLQHVLLHLLLLPIAIPYAEG. The residue at position 32 (Q32) is a Pyrrolidone carboxylic acid. In terms of domain architecture, PAN spans 37–123; the sequence is NTLHEFKRSA…HEFDLYENKD (87 aa). Intrachain disulfides connect C70-C96, C74-C84, C128-C206, C149-C189, C177-C201, C211-C288, C232-C271, and C260-C283. Kringle domains lie at 128-206 and 211-288; these read CIIG…IPQC and CMTC…IKMC. N294 carries N-linked (GlcNAc...) asparagine glycosylation. 11 disulfides stabilise this stretch: C305–C383, C326–C365, C354–C377, C391–C469, C412–C452, C440–C464, C487–C606, C519–C535, C614–C681, C644–C660, and C671–C699. 2 Kringle domains span residues 305–383 and 391–469; these read CIQG…IPKC and CYRG…ISRC. The Peptidase S1 domain occupies 495–723; it reads VVNGIPTRTN…YAKWIHKIIL (229 aa). N-linked (GlcNAc...) asparagine glycans are attached at residues N568 and N655.

This sequence belongs to the peptidase S1 family. Plasminogen subfamily. In terms of assembly, dimer of an alpha chain and a beta chain linked by a disulfide bond. Interacts with SRPX2; the interaction increases HGF mitogenic activity. In terms of processing, the single-chain precursor undergoes proteolytic processing by TMPRSS13 resulting in an active two-chain form. The single-chain precursor undergoes proteolytic processing by HGFAC resulting in an active two-chain form.

Potent mitogen for mature parenchymal hepatocyte cells, seems to be a hepatotrophic factor, and acts as a growth factor for a broad spectrum of tissues and cell types. Activating ligand for the receptor tyrosine kinase MET by binding to it and promoting its dimerization. Activates MAPK signaling following TMPRSS13 cleavage and activation. This chain is Hepatocyte growth factor (HGF), found in Bos taurus (Bovine).